The primary structure comprises 702 residues: Elongation factor G (702 aa).

One can recognise a tr-type G domain in the interval 8-196; it reads ERYRNIGISA…MKAIIWDEAS (189 aa). GTP is bound by residues 17–24, 88–92, and 142–145; these read AHIDAGKT, DTPGH, and NKMD.

Belongs to the TRAFAC class translation factor GTPase superfamily. Classic translation factor GTPase family. EF-G/EF-2 subfamily.

It is found in the cytoplasm. Functionally, catalyzes the GTP-dependent ribosomal translocation step during translation elongation. During this step, the ribosome changes from the pre-translocational (PRE) to the post-translocational (POST) state as the newly formed A-site-bound peptidyl-tRNA and P-site-bound deacylated tRNA move to the P and E sites, respectively. Catalyzes the coordinated movement of the two tRNA molecules, the mRNA and conformational changes in the ribosome. This chain is Elongation factor G (fusA), found in Thiomonas delicata (Thiomonas cuprina).